Reading from the N-terminus, the 49-residue chain is Large ribosomal subunit protein bL33B (49 aa).

It belongs to the bacterial ribosomal protein bL33 family.

The polypeptide is Large ribosomal subunit protein bL33B (Bacillus velezensis (strain DSM 23117 / BGSC 10A6 / LMG 26770 / FZB42) (Bacillus amyloliquefaciens subsp. plantarum)).